Consider the following 443-residue polypeptide: Tryptophan synthase beta chain (443 aa).

Residue Lys110 is modified to N6-(pyridoxal phosphate)lysine.

It belongs to the TrpB family. As to quaternary structure, tetramer of two alpha and two beta chains. Pyridoxal 5'-phosphate serves as cofactor.

The catalysed reaction is (1S,2R)-1-C-(indol-3-yl)glycerol 3-phosphate + L-serine = D-glyceraldehyde 3-phosphate + L-tryptophan + H2O. The protein operates within amino-acid biosynthesis; L-tryptophan biosynthesis; L-tryptophan from chorismate: step 5/5. The beta subunit is responsible for the synthesis of L-tryptophan from indole and L-serine. This Thermococcus onnurineus (strain NA1) protein is Tryptophan synthase beta chain.